The chain runs to 477 residues: UDP-glycosyltransferase 71K1 (477 aa).

UDP-alpha-D-glucose-binding positions include serine 285, 350–351 (WA), 368–376 (HCGWNSILE), and 390–393 (YAEQ).

Belongs to the UDP-glycosyltransferase family.

Glycosyltransferase that possesses chalcone and flavonol 2'-O-glycosyltransferase activity. Converts phloretin to phlorizin (phloretin 2'-O-glucoside), a potent antioxidant. Possesses glycosyltransferase activity toward quercetin, isoliquiritigenin, butein and caffeic acid. The protein is UDP-glycosyltransferase 71K1 of Malus domestica (Apple).